We begin with the raw amino-acid sequence, 410 residues long: Probable peptidoglycan glycosyltransferase FtsW (410 aa).

Residues 1–37 lie on the Cytoplasmic side of the membrane; sequence MRSEERQLNLFGTSVNWSWPNLFKEREAPGMQLYDRA. Residues 38-58 traverse the membrane as a helical segment; the sequence is LLFAVLSLICFGFVMVMSASM. Residues 59–69 lie on the Periplasmic side of the membrane; the sequence is PEAQSLTGNPY. A helical membrane pass occupies residues 70–90; that stretch reads HFAIRHFAYLVGCAVIAAVVL. Residues 91 to 99 lie on the Cytoplasmic side of the membrane; the sequence is RIEMSRWQQ. Residues 100–120 form a helical membrane-spanning segment; it reads FSPLLLLIVGIMLVAVLLVGT. The Periplasmic portion of the chain corresponds to 121–131; sequence SVNGATRWLSV. A helical transmembrane segment spans residues 132–154; that stretch reads GPIRIQVAELAKFAFTIYMAGYL. At 155 to 163 the chain is on the cytoplasmic side; it reads VRRHQEIRE. Residues 164–184 traverse the membrane as a helical segment; sequence NAKGFYKPIAVFAVYAFLILM. Over 185–186 the chain is Periplasmic; that stretch reads QP. A helical membrane pass occupies residues 187–207; it reads DLGTVVVLFVGTVGLLFLAGA. Arg-208 is a topological domain (cytoplasmic). A helical membrane pass occupies residues 209 to 229; that stretch reads LLDFFALILTGVMAFVALVLL. Residues 230–291 lie on the Periplasmic side of the membrane; the sequence is EPYRMRRVTS…PEAHTDFIFA (62 aa). The chain crosses the membrane as a helical span at residues 292-312; the sequence is VIGEELGFIGIVVVLSVLLFV. The Cytoplasmic segment spans residues 313 to 336; sequence ALRAIKLGNLCIEIDKPFEGYLAY. The chain crosses the membrane as a helical span at residues 337 to 357; that stretch reads AIGIWFCFQTVVNVGASIGML. Residues 358–364 are Periplasmic-facing; that stretch reads PTKGLTL. A helical membrane pass occupies residues 365 to 385; it reads PFISYGGSSLWVMTAAAMILI. Over 386-410 the chain is Cytoplasmic; that stretch reads RIDHERRLSSIQAVQGKKVNDNREY.

Belongs to the SEDS family. FtsW subfamily.

It localises to the cell inner membrane. It catalyses the reaction [GlcNAc-(1-&gt;4)-Mur2Ac(oyl-L-Ala-gamma-D-Glu-L-Lys-D-Ala-D-Ala)](n)-di-trans,octa-cis-undecaprenyl diphosphate + beta-D-GlcNAc-(1-&gt;4)-Mur2Ac(oyl-L-Ala-gamma-D-Glu-L-Lys-D-Ala-D-Ala)-di-trans,octa-cis-undecaprenyl diphosphate = [GlcNAc-(1-&gt;4)-Mur2Ac(oyl-L-Ala-gamma-D-Glu-L-Lys-D-Ala-D-Ala)](n+1)-di-trans,octa-cis-undecaprenyl diphosphate + di-trans,octa-cis-undecaprenyl diphosphate + H(+). Its pathway is cell wall biogenesis; peptidoglycan biosynthesis. Peptidoglycan polymerase that is essential for cell division. The chain is Probable peptidoglycan glycosyltransferase FtsW from Shewanella sediminis (strain HAW-EB3).